The primary structure comprises 422 residues: Exodeoxyribonuclease 7 large subunit (422 aa).

This sequence belongs to the XseA family. In terms of assembly, heterooligomer composed of large and small subunits.

It is found in the cytoplasm. It catalyses the reaction Exonucleolytic cleavage in either 5'- to 3'- or 3'- to 5'-direction to yield nucleoside 5'-phosphates.. Bidirectionally degrades single-stranded DNA into large acid-insoluble oligonucleotides, which are then degraded further into small acid-soluble oligonucleotides. The protein is Exodeoxyribonuclease 7 large subunit of Leptospira interrogans serogroup Icterohaemorrhagiae serovar copenhageni (strain Fiocruz L1-130).